The following is a 711-amino-acid chain: Polyribonucleotide nucleotidyltransferase (711 aa).

Mg(2+) contacts are provided by D486 and D492. The 60-residue stretch at 553–612 (PRIHTIKISTDKIKDVIGKGGSVIRALTEETGTTIEIEDDGTVKIAATDGEKAKYAIRRI) folds into the KH domain. Positions 622–690 (GRIYNGKVTR…RQGRVRLSIK (69 aa)) constitute an S1 motif domain. Positions 690-711 (KEATEQSQPAAAPEAPASEQAE) are disordered. Residues 694 to 711 (EQSQPAAAPEAPASEQAE) show a composition bias toward low complexity.

The protein belongs to the polyribonucleotide nucleotidyltransferase family. Component of the RNA degradosome, which is a multiprotein complex involved in RNA processing and mRNA degradation. It depends on Mg(2+) as a cofactor.

The protein resides in the cytoplasm. It carries out the reaction RNA(n+1) + phosphate = RNA(n) + a ribonucleoside 5'-diphosphate. Its function is as follows. Involved in mRNA degradation. Catalyzes the phosphorolysis of single-stranded polyribonucleotides processively in the 3'- to 5'-direction. The polypeptide is Polyribonucleotide nucleotidyltransferase (Salmonella choleraesuis (strain SC-B67)).